Consider the following 221-residue polypeptide: GTP cyclohydrolase 1 (221 aa).

Zn(2+)-binding residues include C109, H112, and C180.

The protein belongs to the GTP cyclohydrolase I family. As to quaternary structure, toroid-shaped homodecamer, composed of two pentamers of five dimers.

It catalyses the reaction GTP + H2O = 7,8-dihydroneopterin 3'-triphosphate + formate + H(+). It functions in the pathway cofactor biosynthesis; 7,8-dihydroneopterin triphosphate biosynthesis; 7,8-dihydroneopterin triphosphate from GTP: step 1/1. This chain is GTP cyclohydrolase 1, found in Serratia proteamaculans (strain 568).